Reading from the N-terminus, the 62-residue chain is MKYFSVLVVLTLILAIVDQSDAFINLLDKVEDALHTGAQAGFKLIRPVERGATPKKSEKPEK.

The signal sequence occupies residues 1-22 (MKYFSVLVVLTLILAIVDQSDA).

It belongs to the andropin family. As to expression, ejaculatory duct of adult males.

It localises to the secreted. Male-specific peptide with moderate activity against Gram-positive bacteria. In Drosophila teissieri (Fruit fly), this protein is Andropin (Anp).